The sequence spans 164 residues: ATP synthase subunit b (164 aa).

Residues 6–26 traverse the membrane as a helical segment; that stretch reads GELVGNFILVTGSVIVLLLLI.

Belongs to the ATPase B chain family. In terms of assembly, F-type ATPases have 2 components, F(1) - the catalytic core - and F(0) - the membrane proton channel. F(1) has five subunits: alpha(3), beta(3), gamma(1), delta(1), epsilon(1). F(0) has three main subunits: a(1), b(2) and c(10-14). The alpha and beta chains form an alternating ring which encloses part of the gamma chain. F(1) is attached to F(0) by a central stalk formed by the gamma and epsilon chains, while a peripheral stalk is formed by the delta and b chains.

The protein localises to the cell membrane. Its function is as follows. F(1)F(0) ATP synthase produces ATP from ADP in the presence of a proton or sodium gradient. F-type ATPases consist of two structural domains, F(1) containing the extramembraneous catalytic core and F(0) containing the membrane proton channel, linked together by a central stalk and a peripheral stalk. During catalysis, ATP synthesis in the catalytic domain of F(1) is coupled via a rotary mechanism of the central stalk subunits to proton translocation. In terms of biological role, component of the F(0) channel, it forms part of the peripheral stalk, linking F(1) to F(0). The polypeptide is ATP synthase subunit b (Streptococcus pyogenes serotype M1).